A 942-amino-acid polypeptide reads, in one-letter code: Protein O-mannosyl-transferase TMTC1 (942 aa).

At 1 to 20 the chain is on the cytoplasmic side; the sequence is MLVTRGDRGGGERAPSRRPR. Residues 21–41 form a helical membrane-spanning segment; sequence CGLVPAGAAALLAGASCLCYG. The Extracellular portion of the chain corresponds to 42–109; sequence RSLRGEFVHD…RLNIFLTGMN (68 aa). A helical transmembrane segment spans residues 110–130; sequence PFYFHAVNVILHCLVTLVLMY. Topologically, residues 131-140 are cytoplasmic; that stretch reads TCDKTVFKNR. The chain crosses the membrane as a helical span at residues 141-157; that stretch reads GLAFVTALLFAVHPVHT. The Extracellular portion of the chain corresponds to 158–159; the sequence is EA. A helical transmembrane segment spans residues 160–180; the sequence is VAGIVGRADVLACLLFLLAFL. The Cytoplasmic segment spans residues 181–196; sequence SYQRSLDQGCAGQCFP. Residues 197 to 217 form a helical membrane-spanning segment; it reads TTASPFFLLLSLFLGTCAMLV. Topologically, residues 218-331 are extracellular; the sequence is KETGITVFGV…LLTLRPFLKR (114 aa). The interval 245 to 285 is disordered; it reads NGAVCQHSSGQPGSPQPSSQQAHPHRESRKQRFPHKDSWGG. A compositionally biased stretch (low complexity) spans 250 to 266; it reads QHSSGQPGSPQPSSQQA. A helical membrane pass occupies residues 332-352; the sequence is AILVISYVTVILYFRLWIMGG. The Cytoplasmic portion of the chain corresponds to 353 to 373; sequence TMPLFSEQDNPASFSPYILTR. The chain crosses the membrane as a helical span at residues 374 to 394; sequence FLTYSYLLAFNVWLLLAPITL. Topologically, residues 395-414 are extracellular; that stretch reads CYDWQVGSIPLVETIWDVRN. The chain crosses the membrane as a helical span at residues 415-435; that stretch reads LATILLAVVMALLSLHCVAAF. Residues 436-441 are Cytoplasmic-facing; that stretch reads KRLEHK. Residues 442 to 462 form a helical membrane-spanning segment; it reads EVLAGLLFLVFPFIPASNLFF. Arg-463 is a topological domain (extracellular). The helical transmembrane segment at 464–484 threads the bilayer; it reads VGFVVAERVLYMPSMGYCILF. The Cytoplasmic portion of the chain corresponds to 485–498; sequence VHGLSKLCAGLSRC. The chain crosses the membrane as a helical span at residues 499-519; it reads GATSLMASTVLLLLLFSWKTV. Residues 520–942 lie on the Extracellular side of the membrane; the sequence is KQNEIWLSRE…LQEVRERDQT (423 aa). TPR repeat units lie at residues 543–576, 577–607, 608–641, 642–675, 676–709, 710–742, 743–776, 777–810, 811–844, 849–882, and 883–916; these read AKVHYNYANFLKDQGRNKEAIYHYRTALKLYPRH, ASALNNLGTLTKDMAEAKMYYQKALQLHPQH, NRALFNLGNLLKSQEKTEEAIMLLKESIKYGPDF, ADAYSSLASLLAEQERFKEAEDIYQAGIKNCPDS, SDLHNNYAVFLVDSGFPEKAVAHYQQAIQLSPSH, HVAVVNLGRLYRSLGENSKAEEWYRRALKVART, AEVLSPLGALYYNTGRHKEALEVYREAVSLQPSQ, RELRLALAQVLAVMGQTKEAEKITSHIVSEEPRC, LECYRLLSAIHSKQEHHGKALEAIEKALQLKPKD, SELFFTKGNQLREQNLLDKAFESYEAAVTLDPDQ, and AQAWMNMGGIRHIQGSYVSARAYYERALKLVPDS.

This sequence belongs to the TMTC family. May interact with FAM168B.

Its subcellular location is the membrane. The protein localises to the endoplasmic reticulum. It catalyses the reaction a di-trans,poly-cis-dolichyl beta-D-mannosyl phosphate + L-seryl-[protein] = 3-O-(alpha-D-mannosyl)-L-seryl-[protein] + a di-trans,poly-cis-dolichyl phosphate + H(+). The catalysed reaction is a di-trans,poly-cis-dolichyl beta-D-mannosyl phosphate + L-threonyl-[protein] = 3-O-(alpha-D-mannosyl)-L-threonyl-[protein] + a di-trans,poly-cis-dolichyl phosphate + H(+). It functions in the pathway protein modification; protein glycosylation. Functionally, transfers mannosyl residues to the hydroxyl group of serine or threonine residues. The 4 members of the TMTC family are O-mannosyl-transferases dedicated primarily to the cadherin superfamily, each member seems to have a distinct role in decorating the cadherin domains with O-linked mannose glycans at specific regions. Also acts as O-mannosyl-transferase on other proteins such as PDIA3. The sequence is that of Protein O-mannosyl-transferase TMTC1 from Mus musculus (Mouse).